A 441-amino-acid chain; its full sequence is Eukaryotic translation initiation factor 3 subunit E (441 aa).

Residues 223–407 form the PCI domain; that stretch reads IFFNHDNGRT…GTVIMEPTQP (185 aa).

It belongs to the eIF-3 subunit E family. In terms of assembly, component of the eukaryotic translation initiation factor 3 (eIF-3) complex (Potential). Binds to the translation initiation factors TIF3F1 and TIF3H1. Associates with the CSN (COP9 signalosome) complex. Interacts directly with CSN1, CSN4, CSN6A, CSN6B, CSN7, CSN8 and TIF3C1. Binds to 40S small ribosomal subunit S9 (RPS9B and RPS9C) via its N-terminal part. Interacts with the 26S proteasome subunit RPN12a via its C-terminal part. Also binds with At1g27930 and At4g30620.

It localises to the cytoplasm. It is found in the nucleus. Its function is as follows. Component of the eukaryotic translation initiation factor 3 (eIF-3) complex, which is involved in protein synthesis of a specialized repertoire of mRNAs and, together with other initiation factors, stimulates binding of mRNA and methionyl-tRNAi to the 40S ribosome. The eIF-3 complex specifically targets and initiates translation of a subset of mRNAs involved in cell proliferation (Potential). Negatively regulates translation during flower development. This Arabidopsis thaliana (Mouse-ear cress) protein is Eukaryotic translation initiation factor 3 subunit E.